The following is a 168-amino-acid chain: Sec-independent protein translocase protein TatB (168 aa).

Residues 1–21 traverse the membrane as a helical segment; that stretch reads MIDLGISKLALIGAVALIVIG. Disordered regions lie at residues 92–132 and 146–168; these read FDGS…QGAR and VQSGAARVKRHRPASGRNRSFFE. Over residues 94–107 the composition is skewed to low complexity; that stretch reads GSASSSSSSDTGSG. A compositionally biased stretch (basic residues) spans 117–126; the sequence is KSHNGRKSWR.

This sequence belongs to the TatB family. As to quaternary structure, the Tat system comprises two distinct complexes: a TatABC complex, containing multiple copies of TatA, TatB and TatC subunits, and a separate TatA complex, containing only TatA subunits. Substrates initially bind to the TatABC complex, which probably triggers association of the separate TatA complex to form the active translocon.

It is found in the cell inner membrane. Its function is as follows. Part of the twin-arginine translocation (Tat) system that transports large folded proteins containing a characteristic twin-arginine motif in their signal peptide across membranes. Together with TatC, TatB is part of a receptor directly interacting with Tat signal peptides. TatB may form an oligomeric binding site that transiently accommodates folded Tat precursor proteins before their translocation. The sequence is that of Sec-independent protein translocase protein TatB from Cupriavidus metallidurans (strain ATCC 43123 / DSM 2839 / NBRC 102507 / CH34) (Ralstonia metallidurans).